A 484-amino-acid chain; its full sequence is Cobyric acid synthase (484 aa).

The 188-residue stretch at 251–438 (ALKVAVPVLS…LHGLFGSDAY (188 aa)) folds into the GATase cobBQ-type domain. C333 functions as the Nucleophile in the catalytic mechanism. The active site involves H430.

The protein belongs to the CobB/CobQ family. CobQ subfamily.

Its pathway is cofactor biosynthesis; adenosylcobalamin biosynthesis. Catalyzes amidations at positions B, D, E, and G on adenosylcobyrinic A,C-diamide. NH(2) groups are provided by glutamine, and one molecule of ATP is hydrogenolyzed for each amidation. The chain is Cobyric acid synthase from Sinorhizobium fredii (strain NBRC 101917 / NGR234).